Consider the following 351-residue polypeptide: MESNYSIHLNGSEVVVYDSTISRVLWILSMVVVSITFFLGVLGNGLVIWVAGFRMPHTVTTIWYLNLALADFSFTATLPFLLVEMAMKEKWPFGWFLCKLVHIVVDVNLFGSVFLIALIALDRCICVLHPVWAQNHRTVSLARKVVVGPWIFALILTLPIFIFLTTVRIPGGDVYCTFNFGSWAQTDEEKLNTAITFVTTRGIIRFLIGFSMPMSIVAVCYGLIAVKINRRNLVNSSRPLRVLTAVVASFFICWFPFQLVALLGTVWFKETLLSGSYKILDMFVNPTSSLAYFNSCLNPMLYVFMGQDFRERFIHSLPYSLERALSEDSGQTSDSSTSSTSPPADIELKAP.

Residues 1 to 29 (MESNYSIHLNGSEVVVYDSTISRVLWILS) are Extracellular-facing. N-linked (GlcNAc...) asparagine glycosylation is found at Asn4 and Asn10. Residues 30-50 (MVVVSITFFLGVLGNGLVIWV) form a helical membrane-spanning segment. Residues 51 to 61 (AGFRMPHTVTT) are Cytoplasmic-facing. Residues 62–82 (IWYLNLALADFSFTATLPFLL) traverse the membrane as a helical segment. Topologically, residues 83–99 (VEMAMKEKWPFGWFLCK) are extracellular. A disulfide bridge connects residues Cys98 and Cys176. Residues 100-120 (LVHIVVDVNLFGSVFLIALIA) form a helical membrane-spanning segment. The Cytoplasmic segment spans residues 121-144 (LDRCICVLHPVWAQNHRTVSLARK). Residues 145–165 (VVVGPWIFALILTLPIFIFLT) form a helical membrane-spanning segment. The Extracellular portion of the chain corresponds to 166–205 (TVRIPGGDVYCTFNFGSWAQTDEEKLNTAITFVTTRGIIR). A helical transmembrane segment spans residues 206-226 (FLIGFSMPMSIVAVCYGLIAV). The Cytoplasmic portion of the chain corresponds to 227–241 (KINRRNLVNSSRPLR). A helical membrane pass occupies residues 242 to 262 (VLTAVVASFFICWFPFQLVAL). Residues 263-282 (LGTVWFKETLLSGSYKILDM) lie on the Extracellular side of the membrane. Residues 283-305 (FVNPTSSLAYFNSCLNPMLYVFM) form a helical membrane-spanning segment. The Cytoplasmic portion of the chain corresponds to 306-351 (GQDFRERFIHSLPYSLERALSEDSGQTSDSSTSSTSPPADIELKAP). Residues 325–351 (LSEDSGQTSDSSTSSTSPPADIELKAP) form a disordered region. A compositionally biased stretch (low complexity) spans 327 to 341 (EDSGQTSDSSTSSTS).

This sequence belongs to the G-protein coupled receptor 1 family. As to quaternary structure, interacts with Amyloid-beta protein 42, product of APP; the interaction takes place at the cell surface and the complex is then rapidly internalized. In terms of tissue distribution, primarily expressed in neutrophils. Not detected in vomeronasal neurons.

It localises to the cell membrane. Functionally, high affinity receptor for N-formyl-methionyl peptides (FMLP), which are powerful neutrophil chemotactic factors. Stimulates chemotaxis in immune cells to site of infection or tissue damage upon recognition of several ligands, such as FMLP, or ligand involved in cell damage, disease or inflammation. Receptor for the chemokine-like protein FAM19A5, mediating FAM19A5-stimulated macrophage chemotaxis and the inhibitory effect on TNFSF11/RANKL-induced osteoclast differentiation. The chain is Formyl peptide receptor 2 (Fpr2) from Mus musculus (Mouse).